Consider the following 580-residue polypeptide: E3 ubiquitin-protein ligase TRIM45 (580 aa).

The RING-type zinc finger occupies 29–98 (CPLCLGLFKA…QIGILCPVCD (70 aa)). 2 B box-type zinc fingers span residues 130-176 (GQGL…MVDL) and 186-227 (GKPI…CDFT). Residues Cys-135, Cys-138, Cys-158, His-162, Cys-191, His-194, Cys-214, and His-219 each contribute to the Zn(2+) site. A coiled-coil region spans residues 281–335 (SEGYIKAIEEHRDKLLKQLEDIRAQKENSLQLQKAQLEQLLADMRTGVEFTEHLL). The Filamin repeat unit spans residues 394 to 497 (TKEVDPAKCV…VQGSPFTVMV (104 aa)).

It belongs to the TRIM/RBCC family. As to expression, expressed in skeletal muscle, brain, heart and pancreas.

The protein resides in the cytoplasm. It localises to the nucleus. It carries out the reaction S-ubiquitinyl-[E2 ubiquitin-conjugating enzyme]-L-cysteine + [acceptor protein]-L-lysine = [E2 ubiquitin-conjugating enzyme]-L-cysteine + N(6)-ubiquitinyl-[acceptor protein]-L-lysine.. In terms of biological role, E3 ubiquitin-protein ligase that plays a role in the regulation of inflammatory response. Mechanistically, mediates the 'Lys-48'-linked polyubiquitination of TAB2, a regulatory protein of the kinase TAK1, leading to its degradation via the proteasomal pathway and inhibition of the TLR-mediated inflammatory immune response. May act as a transcriptional repressor in mitogen-activated protein kinase signaling pathway. The sequence is that of E3 ubiquitin-protein ligase TRIM45 (TRIM45) from Homo sapiens (Human).